The following is a 21-amino-acid chain: Cytoplasmic filament protein A (21 aa).

The tract at residues 1 to 21 is disordered; sequence AILELPQSPNVFHPEKPSAVG.

Its subcellular location is the cytoplasm. Its function is as follows. Component of the cytoplasmic filaments that run the length of the organism just underneath the cytoplasmic membrane. In Treponema phagedenis, this protein is Cytoplasmic filament protein A (cfpA).